The sequence spans 212 residues: Adenylate kinase (212 aa).

10–15 (GAGKGT) provides a ligand contact to ATP. The interval 30–59 (STGDMFRAAMANQTEMGRLAKSYIDKGELV) is NMP. AMP-binding positions include Thr-31, Arg-36, 57–59 (ELV), 86–89 (GYPR), and Gln-93. The interval 127–159 (GRIINRKTGETFHKVFNPPVDYKEEDYYQREDD) is LID. ATP-binding positions include Arg-128 and 137-138 (TF). AMP-binding residues include Arg-156 and Arg-167. Gln-195 lines the ATP pocket.

This sequence belongs to the adenylate kinase family. Monomer.

The protein resides in the cytoplasm. It carries out the reaction AMP + ATP = 2 ADP. It functions in the pathway purine metabolism; AMP biosynthesis via salvage pathway; AMP from ADP: step 1/1. Its function is as follows. Catalyzes the reversible transfer of the terminal phosphate group between ATP and AMP. Plays an important role in cellular energy homeostasis and in adenine nucleotide metabolism. In Streptococcus pyogenes serotype M3 (strain ATCC BAA-595 / MGAS315), this protein is Adenylate kinase.